Reading from the N-terminus, the 862-residue chain is DNA mismatch repair protein MutS (862 aa).

Residue 604–611 (GPNMAGKS) participates in ATP binding.

The protein belongs to the DNA mismatch repair MutS family.

This protein is involved in the repair of mismatches in DNA. It is possible that it carries out the mismatch recognition step. This protein has a weak ATPase activity. The chain is DNA mismatch repair protein MutS from Brevibacillus brevis (strain 47 / JCM 6285 / NBRC 100599).